Consider the following 440-residue polypeptide: Adenylosuccinate synthetase 1, chloroplastic (440 aa).

Residues 13–19 (GDEGKGK) and 41–43 (GHT) each bind GTP. The Proton acceptor role is filled by D14. Mg(2+)-binding residues include D14 and G41. Residues 14 to 17 (DEGK), 39 to 42 (NAGH), T135, R149, Q230, T245, and R313 contribute to the IMP site. H42 functions as the Proton donor in the catalytic mechanism. A substrate-binding site is contributed by 309–315 (TVTRRKR). GTP contacts are provided by residues R315 and 341–343 (KLD).

It belongs to the adenylosuccinate synthetase family. In terms of assembly, homodimer. Mg(2+) is required as a cofactor.

It localises to the plastid. The protein resides in the chloroplast. It carries out the reaction IMP + L-aspartate + GTP = N(6)-(1,2-dicarboxyethyl)-AMP + GDP + phosphate + 2 H(+). Its pathway is purine metabolism; AMP biosynthesis via de novo pathway; AMP from IMP: step 1/2. Plays an important role in the de novo pathway and in the salvage pathway of purine nucleotide biosynthesis. Catalyzes the first committed step in the biosynthesis of AMP from IMP. The polypeptide is Adenylosuccinate synthetase 1, chloroplastic (Ricinus communis (Castor bean)).